The chain runs to 376 residues: Phytanoyl-CoA hydroxylase-interacting protein-like (376 aa).

2 positions are modified to phosphoserine: Ser12 and Ser15. An N-linked (GlcNAc...) asparagine glycan is attached at Asn23. Ser25 is subject to Phosphoserine. A glycan (N-linked (GlcNAc...) asparagine) is linked at Asn37. The Fibronectin type-III domain maps to 52-161 (VPHNIKISNI…EIIEFCTADY (110 aa)).

It belongs to the PHYHIP family.

Functionally, may play a role in the development of the central system. This Homo sapiens (Human) protein is Phytanoyl-CoA hydroxylase-interacting protein-like (PHYHIPL).